Here is a 583-residue protein sequence, read N- to C-terminus: Tetratricopeptide repeat protein 39C (583 aa).

The disordered stretch occupies residues 1–22 (MAGSEQQRPRRRDDGDSDAAAA). TPR repeat units lie at residues 315-348 (SLFM…AVDQ), 353-386 (HVCL…SRWS), and 485-518 (GLKY…ELCR).

It belongs to the TTC39 family.

This Homo sapiens (Human) protein is Tetratricopeptide repeat protein 39C (TTC39C).